Consider the following 117-residue polypeptide: Small ribosomal subunit protein bS6m (117 aa).

This sequence belongs to the bacterial ribosomal protein bS6 family. As to quaternary structure, component of the mitochondrial small ribosomal subunit (mt-SSU). Mature N.crassa 74S mitochondrial ribosomes consist of a small (37S) and a large (54S) subunit. The 37S small subunit contains a 16S ribosomal RNA (16S mt-rRNA) and 32 different proteins. The 54S large subunit contains a 23S rRNA (23S mt-rRNA) and 42 different proteins.

The protein resides in the mitochondrion. Functionally, component of the mitochondrial ribosome (mitoribosome), a dedicated translation machinery responsible for the synthesis of mitochondrial genome-encoded proteins, including at least some of the essential transmembrane subunits of the mitochondrial respiratory chain. The mitoribosomes are attached to the mitochondrial inner membrane and translation products are cotranslationally integrated into the membrane. This is Small ribosomal subunit protein bS6m (mrp17) from Neurospora crassa (strain ATCC 24698 / 74-OR23-1A / CBS 708.71 / DSM 1257 / FGSC 987).